Reading from the N-terminus, the 198-residue chain is ATP-dependent Clp protease proteolytic subunit 1 (198 aa).

S96 serves as the catalytic Nucleophile. H121 is a catalytic residue.

This sequence belongs to the peptidase S14 family. In terms of assembly, fourteen ClpP subunits assemble into 2 heptameric rings which stack back to back to give a disk-like structure with a central cavity, resembling the structure of eukaryotic proteasomes.

It localises to the cytoplasm. It catalyses the reaction Hydrolysis of proteins to small peptides in the presence of ATP and magnesium. alpha-casein is the usual test substrate. In the absence of ATP, only oligopeptides shorter than five residues are hydrolyzed (such as succinyl-Leu-Tyr-|-NHMec, and Leu-Tyr-Leu-|-Tyr-Trp, in which cleavage of the -Tyr-|-Leu- and -Tyr-|-Trp bonds also occurs).. Functionally, cleaves peptides in various proteins in a process that requires ATP hydrolysis. Has a chymotrypsin-like activity. Plays a major role in the degradation of misfolded proteins. This is ATP-dependent Clp protease proteolytic subunit 1 from Synechocystis sp. (strain ATCC 27184 / PCC 6803 / Kazusa).